An 80-amino-acid polypeptide reads, in one-letter code: UPF0181 protein SG1330 (80 aa).

A disordered region spans residues 58–80; sequence TEVLETPAARAETDPYDSNPDDD.

It belongs to the UPF0181 family.

The chain is UPF0181 protein SG1330 from Sodalis glossinidius (strain morsitans).